Here is a 487-residue protein sequence, read N- to C-terminus: Beta-barrel assembly-enhancing protease (487 aa).

The N-terminal stretch at 1-27 (MFRQLKKNLVATLIAALALGQVAPAFA) is a signal peptide. Residue His136 participates in Zn(2+) binding. Glu137 is a catalytic residue. Positions 140 and 201 each coordinate Zn(2+). Residue Asp205 is the Proton donor of the active site. TPR repeat units follow at residues 309 to 342 (HAAQ…EPNN) and 427 to 460 (DQEL…AKLG).

The protein belongs to the peptidase M48 family. BepA subfamily. It depends on Zn(2+) as a cofactor.

The protein localises to the periplasm. Its function is as follows. Functions both as a chaperone and a metalloprotease. Maintains the integrity of the outer membrane by promoting either the assembly or the elimination of outer membrane proteins, depending on their folding state. This Salmonella typhi protein is Beta-barrel assembly-enhancing protease.